A 318-amino-acid chain; its full sequence is Phospho-N-acetylmuramoyl-pentapeptide-transferase (318 aa).

10 helical membrane-spanning segments follow: residues 5 to 25 (LKPL…VLAF), 50 to 70 (PTMG…VLAP), 71 to 91 (PSPL…IGLV), 115 to 135 (VLLG…GSVI), 139 to 159 (VTGW…LLLV), 173 to 193 (GLAA…ALTL), 198 to 218 (LVTF…YNFH), 222 to 242 (VFMG…LAIM), 248 to 268 (VLPV…LQVV), and 298 to 318 (VLFF…LLTI).

The protein belongs to the glycosyltransferase 4 family. MraY subfamily. Mg(2+) serves as cofactor.

It localises to the cell membrane. The enzyme catalyses UDP-N-acetyl-alpha-D-muramoyl-L-alanyl-gamma-D-glutamyl-meso-2,6-diaminopimeloyl-D-alanyl-D-alanine + di-trans,octa-cis-undecaprenyl phosphate = di-trans,octa-cis-undecaprenyl diphospho-N-acetyl-alpha-D-muramoyl-L-alanyl-D-glutamyl-meso-2,6-diaminopimeloyl-D-alanyl-D-alanine + UMP. Its pathway is cell wall biogenesis; peptidoglycan biosynthesis. Functionally, catalyzes the initial step of the lipid cycle reactions in the biosynthesis of the cell wall peptidoglycan: transfers peptidoglycan precursor phospho-MurNAc-pentapeptide from UDP-MurNAc-pentapeptide onto the lipid carrier undecaprenyl phosphate, yielding undecaprenyl-pyrophosphoryl-MurNAc-pentapeptide, known as lipid I. The sequence is that of Phospho-N-acetylmuramoyl-pentapeptide-transferase from Moorella thermoacetica (strain ATCC 39073 / JCM 9320).